The primary structure comprises 178 residues: ATP-dependent protease subunit HslV (178 aa).

T2 is an active-site residue. The Na(+) site is built by S159, C162, and T165.

This sequence belongs to the peptidase T1B family. HslV subfamily. In terms of assembly, a double ring-shaped homohexamer of HslV is capped on each side by a ring-shaped HslU homohexamer. The assembly of the HslU/HslV complex is dependent on binding of ATP.

The protein resides in the cytoplasm. It carries out the reaction ATP-dependent cleavage of peptide bonds with broad specificity.. With respect to regulation, allosterically activated by HslU binding. Its function is as follows. Protease subunit of a proteasome-like degradation complex believed to be a general protein degrading machinery. This is ATP-dependent protease subunit HslV from Buchnera aphidicola subsp. Cinara cedri (strain Cc).